The chain runs to 132 residues: Large ribosomal subunit protein bL19 (132 aa).

Belongs to the bacterial ribosomal protein bL19 family.

This protein is located at the 30S-50S ribosomal subunit interface and may play a role in the structure and function of the aminoacyl-tRNA binding site. The sequence is that of Large ribosomal subunit protein bL19 from Rhodospirillum centenum (strain ATCC 51521 / SW).